The chain runs to 505 residues: Deoxyguanosinetriphosphate triphosphohydrolase (505 aa).

The region spanning 66–273 (RLTHSMEVQQ…MEAADDISYC (208 aa)) is the HD domain.

The protein belongs to the dGTPase family. Type 1 subfamily. Homotetramer. It depends on Mg(2+) as a cofactor.

The enzyme catalyses dGTP + H2O = 2'-deoxyguanosine + triphosphate + H(+). Functionally, dGTPase preferentially hydrolyzes dGTP over the other canonical NTPs. The sequence is that of Deoxyguanosinetriphosphate triphosphohydrolase from Escherichia coli (strain K12 / MC4100 / BW2952).